The chain runs to 104 residues: Large ribosomal subunit protein uL23 (104 aa).

Belongs to the universal ribosomal protein uL23 family. Part of the 50S ribosomal subunit. Contacts protein L29, and trigger factor when it is bound to the ribosome.

One of the early assembly proteins it binds 23S rRNA. One of the proteins that surrounds the polypeptide exit tunnel on the outside of the ribosome. Forms the main docking site for trigger factor binding to the ribosome. In Paraburkholderia phytofirmans (strain DSM 17436 / LMG 22146 / PsJN) (Burkholderia phytofirmans), this protein is Large ribosomal subunit protein uL23.